A 148-amino-acid polypeptide reads, in one-letter code: Large ribosomal subunit protein bL9 (148 aa).

It belongs to the bacterial ribosomal protein bL9 family.

Binds to the 23S rRNA. The sequence is that of Large ribosomal subunit protein bL9 from Hydrogenobaculum sp. (strain Y04AAS1).